The chain runs to 105 residues: Large ribosomal subunit protein P2 (105 aa).

The protein belongs to the eukaryotic ribosomal protein P1/P2 family. As to quaternary structure, P1 and P2 exist as dimers at the large ribosomal subunit. In terms of processing, phosphorylated.

Functionally, plays an important role in the elongation step of protein synthesis. This chain is Large ribosomal subunit protein P2 (LIP2), found in Leishmania braziliensis.